We begin with the raw amino-acid sequence, 70 residues long: Peptide Hp1035 (70 aa).

The N-terminal stretch at 1-23 (MKTQFVILLVALVLFQMFAQSEA) is a signal peptide. F36 is modified (phenylalanine amide). Positions 40–70 (GLQDLDMDDLDQLFDGEISQADINFLNQLMR) are excised as a propeptide.

It belongs to the non-disulfide-bridged peptide (NDBP) superfamily. Short antimicrobial peptide (group 4) family. As to expression, expressed by the venom gland.

The protein localises to the secreted. It localises to the target cell membrane. Amphipathic peptide with antimicrobial activity. This is Peptide Hp1035 from Heterometrus petersii (Asian forest scorpion).